A 106-amino-acid polypeptide reads, in one-letter code: Flagellar transcriptional regulator FlhD (106 aa).

The protein belongs to the FlhD family. As to quaternary structure, homodimer; disulfide-linked. Forms a heterohexamer composed of two FlhC and four FlhD subunits. Each FlhC binds a FlhD dimer, forming a heterotrimer, and a hexamer assembles by dimerization of two heterotrimers.

The protein localises to the cytoplasm. Its function is as follows. Functions in complex with FlhC as a master transcriptional regulator that regulates transcription of several flagellar and non-flagellar operons by binding to their promoter region. Activates expression of class 2 flagellar genes, including fliA, which is a flagellum-specific sigma factor that turns on the class 3 genes. Also regulates genes whose products function in a variety of physiological pathways. This Burkholderia pseudomallei (strain 1710b) protein is Flagellar transcriptional regulator FlhD.